Here is a 320-residue protein sequence, read N- to C-terminus: Nucleotide-binding protein Acid_7395 (320 aa).

Residues 1–34 (MPLRKKGAATTKAAATRKDSAKAPASSKRKDAPQ) form a disordered region. An ATP-binding site is contributed by 44–51 (GLSGSGKG). 94–97 (DIRE) lines the GTP pocket.

It belongs to the RapZ-like family.

In terms of biological role, displays ATPase and GTPase activities. This is Nucleotide-binding protein Acid_7395 from Solibacter usitatus (strain Ellin6076).